Here is a 245-residue protein sequence, read N- to C-terminus: DNA polymerase sliding clamp 2 (245 aa).

The protein belongs to the PCNA family. Homotrimer. The subunits circularize to form a toroid; DNA passes through its center. Replication factor C (RFC) is required to load the toroid on the DNA.

Its function is as follows. Sliding clamp subunit that acts as a moving platform for DNA processing. Responsible for tethering the catalytic subunit of DNA polymerase and other proteins to DNA during high-speed replication. The polypeptide is DNA polymerase sliding clamp 2 (Sulfolobus acidocaldarius (strain ATCC 33909 / DSM 639 / JCM 8929 / NBRC 15157 / NCIMB 11770)).